The sequence spans 1337 residues: Receptor-type tyrosine-protein phosphatase eta (1337 aa).

An N-terminal signal peptide occupies residues 1–35 (MKPAAREARLPPRSPGLRWALPLLLLLLRLGQILC). At 36–975 (AGGTPSPIPD…LPQDPGVICG (940 aa)) the chain is on the extracellular side. Polar residues-rich tracts occupy residues 67–82 (SFHK…VETN) and 89–119 (SSGA…STGP). The disordered stretch occupies residues 67–124 (SFHKQNGTGTPQVETNTSEDGESSGANDSLRTPEQGSNGTDGASQKTPSSTGPSPVFD). 34 N-linked (GlcNAc...) asparagine glycosylation sites follow: Asn72, Asn82, Asn93, Asn104, Asn142, Asn172, Asn192, Asn231, Asn258, Asn278, Asn342, Asn351, Asn376, Asn391, Asn396, Asn413, Asn431, Asn501, Asn525, Asn536, Asn582, Asn603, Asn618, Asn628, Asn637, Asn666, Asn669, Asn761, Asn772, Asn784, Asn790, Asn824, Asn910, and Asn937. Fibronectin type-III domains are found at residues 121 to 209 (PVFD…EPIP), 207 to 291 (PIPV…EGGL), 271 to 364 (NPYL…EFRT), 368 to 456 (QVFD…PPVP), 457 to 541 (VSDF…TVPS), 542 to 623 (AVFD…TAQY), 625 to 720 (RPSN…TDPA), 721 to 817 (SMAS…TDPP), and 816 to 902 (PPPP…SEVL). Residues 278-327 (NKTKGDPLGTEGGLDASNTERSRAGSPTAPVHDESLVGPVDPSSGQQSRD) form a disordered region. The chain crosses the membrane as a helical span at residues 976-996 (AVFGCIFGALVIVTVGGFIFW). Topologically, residues 997 to 1337 (RKKRKDAKNN…TFGKTNGYIA (341 aa)) are cytoplasmic. At Ser1009 the chain carries Phosphoserine. One can recognise a Tyrosine-protein phosphatase domain in the interval 1041 to 1298 (FAEEYEDLKL…VFLNQCVLDI (258 aa)). Substrate-binding positions include Asp1205, 1239 to 1245 (CSAGVGR), and Gln1283. The active-site Phosphocysteine intermediate is Cys1239.

Belongs to the protein-tyrosine phosphatase family. Receptor class 3 subfamily. As to quaternary structure, monomer. Interacts with CTNNB1 (phosphorylated) and JUP (phosphorylated). Interacts with FLT3 (phosphorylated). Interacts with GAB1 and GRB2. In terms of processing, N- and O-glycosylated. Post-translationally, N-glycosylated. As to expression, expressed in the promyelocytic cell line HL-60, the granulocyte-macrophage colony-stimulating factor-dependent leukemic cell line F-36P, and the IL3 and erythropoietin-dependent leukemic cell line F-36E. Expressed predominantly in epithelial cells and lymphocytes. Enhanced expression at high cell density. In terms of tissue distribution, expressed in the brain.

It is found in the cell membrane. It localises to the cell projection. The protein localises to the ruffle membrane. The protein resides in the cell junction. Its subcellular location is the secreted. It is found in the extracellular space. It carries out the reaction O-phospho-L-tyrosyl-[protein] + H2O = L-tyrosyl-[protein] + phosphate. Tyrosine phosphatase which dephosphorylates or contributes to the dephosphorylation of CTNND1, FLT3, PDGFRB, MET, KDR, LYN, SRC, MAPK1, MAPK3, EGFR, TJP1, OCLN, PIK3R1 and PIK3R2. Plays a role in cell adhesion, migration, proliferation and differentiation. Has a role in megakaryocytes and platelet formation. Involved in vascular development. Regulator of macrophage adhesion and spreading. Positively affects cell-matrix adhesion. Positive regulator of platelet activation and thrombosis. Negative regulator of cell proliferation. Negative regulator of PDGF-stimulated cell migration; through dephosphorylation of PDGFR. Positive regulator of endothelial cell survival, as well as of VEGF-induced SRC and AKT activation; through KDR dephosphorylation. Negative regulator of EGFR signaling pathway; through EGFR dephosphorylation. Enhances the barrier function of epithelial junctions during reassembly. Negatively regulates T-cell receptor (TCR) signaling. Upon T-cell TCR activation, it is up-regulated and excluded from the immunological synapses, while upon T-cell-antigen presenting cells (APC) disengagement, it is no longer excluded and can dephosphorylate PLCG1 and LAT to down-regulate prolongation of signaling. Functionally, activates angiogenesis and cell migration. Downregulates the expression of the endothelial adhesion molecules ICAM1 and VCAM1. This is Receptor-type tyrosine-protein phosphatase eta (PTPRJ) from Homo sapiens (Human).